We begin with the raw amino-acid sequence, 868 residues long: Leucine--tRNA ligase (868 aa).

The short motif at 42–52 (PYPSGKLHMGH) is the 'HIGH' region element. The 'KMSKS' region signature appears at 627-631 (KMSKS). K630 lines the ATP pocket.

It belongs to the class-I aminoacyl-tRNA synthetase family.

The protein localises to the cytoplasm. The catalysed reaction is tRNA(Leu) + L-leucine + ATP = L-leucyl-tRNA(Leu) + AMP + diphosphate. The sequence is that of Leucine--tRNA ligase from Pseudomonas putida (strain ATCC 47054 / DSM 6125 / CFBP 8728 / NCIMB 11950 / KT2440).